A 98-amino-acid polypeptide reads, in one-letter code: Integration host factor subunit alpha (98 aa).

Over residues 53–69 (DLREKNERPGRNPKTGE) the composition is skewed to basic and acidic residues. The interval 53–72 (DLREKNERPGRNPKTGEDIP) is disordered.

Belongs to the bacterial histone-like protein family. Heterodimer of an alpha and a beta chain.

Functionally, this protein is one of the two subunits of integration host factor, a specific DNA-binding protein that functions in genetic recombination as well as in transcriptional and translational control. The polypeptide is Integration host factor subunit alpha (Vibrio atlanticus (strain LGP32) (Vibrio splendidus (strain Mel32))).